A 398-amino-acid polypeptide reads, in one-letter code: Na(+)/H(+) antiporter NhaA (398 aa).

A run of 12 helical transmembrane segments spans residues 8 to 28 (FLQL…LALI), 59 to 79 (LLLW…GMEI), 96 to 116 (LPVI…SFII), 124 to 144 (AGWA…LSLL), 154 to 174 (VFLL…IALF), 177 to 197 (AELH…LLML), 202 to 222 (VMLL…VLKS), 223 to 243 (GVHA…IRGA), 261 to 281 (YFIL…GLSW), 292 to 312 (IIVG…WLAV), 328 to 348 (LFGL…IGGL), and 362 to 382 (LGIL…LRNA).

This sequence belongs to the NhaA Na(+)/H(+) (TC 2.A.33) antiporter family.

It is found in the cell inner membrane. It catalyses the reaction Na(+)(in) + 2 H(+)(out) = Na(+)(out) + 2 H(+)(in). Functionally, na(+)/H(+) antiporter that extrudes sodium in exchange for external protons. The chain is Na(+)/H(+) antiporter NhaA from Tolumonas auensis (strain DSM 9187 / NBRC 110442 / TA 4).